Consider the following 122-residue polypeptide: uncharacterized protein (122 aa).

The span at 1–15 (MAEPGGRGDYRKDGR) shows a compositional bias: basic and acidic residues. Residues 1 to 49 (MAEPGGRGDYRKDGRLPSLSRSPLSTTLGTSPACGLEIPPTSGARPDGS) form a disordered region. Positions 16 to 32 (LPSLSRSPLSTTLGTSP) are enriched in low complexity.

This is an uncharacterized protein from Homo sapiens (Human).